A 358-amino-acid chain; its full sequence is Protein-arginine kinase (358 aa).

Residues 23 to 250 enclose the Phosphagen kinase C-terminal domain; the sequence is VWPVTTFSLA…SKLSVAEVAA (228 aa). ATP-binding positions include 26-30, 174-178, and 203-208; these read VTTFS, KSQCF, and SSLLLG.

The protein belongs to the ATP:guanido phosphotransferase family.

It catalyses the reaction L-arginyl-[protein] + ATP = N(omega)-phospho-L-arginyl-[protein] + ADP + H(+). Its function is as follows. Catalyzes the specific phosphorylation of arginine residues in proteins. This is Protein-arginine kinase from Chlamydia pneumoniae (Chlamydophila pneumoniae).